Here is a 291-residue protein sequence, read N- to C-terminus: NADH-cytochrome b5 reductase 2 (291 aa).

Residues 7-23 (PIAATSVVAAAASSYYF) form a helical membrane-spanning segment. An FAD-binding FR-type domain is found at 41 to 145 (DQWVDLKLKS…KGPIIKYQWQ (105 aa)). Residue 148 to 183 (LHKEITLIGAGTGITPLYQLISAINKNPEDKTKVNL) participates in FAD binding.

The protein belongs to the flavoprotein pyridine nucleotide cytochrome reductase family. FAD serves as cofactor.

It is found in the mitochondrion outer membrane. It catalyses the reaction 2 Fe(III)-[cytochrome b5] + NADH = 2 Fe(II)-[cytochrome b5] + NAD(+) + H(+). In terms of biological role, may mediate the reduction of outer membrane cytochrome b5. The polypeptide is NADH-cytochrome b5 reductase 2 (MCR1) (Yarrowia lipolytica (strain CLIB 122 / E 150) (Yeast)).